Here is a 155-residue protein sequence, read N- to C-terminus: Ribosome maturation factor RimP (155 aa).

This sequence belongs to the RimP family.

It is found in the cytoplasm. In terms of biological role, required for maturation of 30S ribosomal subunits. The chain is Ribosome maturation factor RimP from Prochlorococcus marinus (strain SARG / CCMP1375 / SS120).